We begin with the raw amino-acid sequence, 89 residues long: Small ribosomal subunit protein uS15 (89 aa).

This sequence belongs to the universal ribosomal protein uS15 family. As to quaternary structure, part of the 30S ribosomal subunit. Forms a bridge to the 50S subunit in the 70S ribosome, contacting the 23S rRNA.

Functionally, one of the primary rRNA binding proteins, it binds directly to 16S rRNA where it helps nucleate assembly of the platform of the 30S subunit by binding and bridging several RNA helices of the 16S rRNA. Its function is as follows. Forms an intersubunit bridge (bridge B4) with the 23S rRNA of the 50S subunit in the ribosome. This chain is Small ribosomal subunit protein uS15, found in Acidiphilium cryptum (strain JF-5).